The sequence spans 196 residues: Small ribosomal subunit protein uS4c (196 aa).

Residues 89-150 (MRLDNIVFRL…NQRSKRLVQN (62 aa)) enclose the S4 RNA-binding domain.

It belongs to the universal ribosomal protein uS4 family. In terms of assembly, part of the 30S ribosomal subunit. Contacts protein S5. The interaction surface between S4 and S5 is involved in control of translational fidelity.

The protein resides in the plastid. Its subcellular location is the chloroplast. Its function is as follows. One of the primary rRNA binding proteins, it binds directly to 16S rRNA where it nucleates assembly of the body of the 30S subunit. In terms of biological role, with S5 and S12 plays an important role in translational accuracy. The protein is Small ribosomal subunit protein uS4c (rps4) of Eleusine indica (Goosegrass).